The sequence spans 203 residues: Abscisic acid receptor PYL5 (203 aa).

The segment covering methionine 1 to histidine 18 has biased composition (polar residues). The tract at residues methionine 1–proline 29 is disordered. An START-like region spans residues histidine 51–asparagine 201. Residues lysine 87, alanine 117 to glutamate 122, arginine 144 to serine 150, and glutamate 166 contribute to the abscisate site. Residues serine 113 to alanine 117 carry the Gate loop motif. A Latch loop motif is present at residues histidine 143 to leucine 145.

It belongs to the PYR/PYL/RCAR abscisic acid intracellular receptor family. Monomer. Homodimer. Binds ABA on one subunit only. Binds to CARs protein in an ABA-independent manner, both at the plasma membrane and in the nucleus. Binds both (-)-ABA and (+)-ABA. Interacts with HAB1, ABI1 and ABI2, and possibly with other PP2Cs.

The protein resides in the cytoplasm. The protein localises to the nucleus. It localises to the cell membrane. Functionally, receptor for abscisic acid (ABA) required for ABA-mediated responses such as stomatal closure and germination inhibition. Inhibits the activity of group-A protein phosphatases type 2C (PP2Cs) in an ABA-independent manner but more efficiently when activated by ABA. Confers enhanced sensitivity to ABA. Can be activated by both (-)-ABA and (+)-ABA. The chain is Abscisic acid receptor PYL5 (PYL5) from Arabidopsis thaliana (Mouse-ear cress).